Consider the following 160-residue polypeptide: Probable small nuclear ribonucleoprotein-associated protein B (160 aa).

The Sm domain occupies 4–86; that stretch reads SKNNKMMAHL…IVSMTVDGPP (83 aa). A disordered region spans residues 80 to 160; the sequence is MTVDGPPPRD…YGGPPGGRPF (81 aa). Composition is skewed to gly residues over residues 99-113, 128-143, and 150-160; these read GGAGGVGQAKPGGRG, APGGLSGAMRGHGGPG, and GYGGPPGGRPF.

This sequence belongs to the snRNP SmB/SmN family.

The protein localises to the nucleus. It is found in the cytoplasm. Its subcellular location is the cytosol. Functionally, plays a role in pre-mRNA splicing as a core component of the spliceosomal U1, U2, U4 and U5 small nuclear ribonucleoproteins (snRNPs), the building blocks of the spliceosome. In Caenorhabditis elegans, this protein is Probable small nuclear ribonucleoprotein-associated protein B (snr-2).